A 129-amino-acid polypeptide reads, in one-letter code: Small ribosomal subunit protein uS11 (129 aa).

It belongs to the universal ribosomal protein uS11 family. Part of the 30S ribosomal subunit. Interacts with proteins S7 and S18. Binds to IF-3.

In terms of biological role, located on the platform of the 30S subunit, it bridges several disparate RNA helices of the 16S rRNA. Forms part of the Shine-Dalgarno cleft in the 70S ribosome. The polypeptide is Small ribosomal subunit protein uS11 (Sphingopyxis alaskensis (strain DSM 13593 / LMG 18877 / RB2256) (Sphingomonas alaskensis)).